Consider the following 247-residue polypeptide: Cytochrome c oxidase subunit 2 (247 aa).

Topologically, residues 1–38 are mitochondrial intermembrane; sequence MREMMMNNMLNDVPTPWAMYFQDSATPNMEGMMELHNN. Residues 39–55 form a helical membrane-spanning segment; sequence VLFYLCVMLGFVTYMLY. At 56-86 the chain is on the mitochondrial matrix side; that stretch reads NVMTVYNKSAMAYKYMNHGQFMEMMWTTFPA. The chain crosses the membrane as a helical span at residues 87–103; it reads MMLLMMAFPSFMLLYMC. Over 104–247 the chain is Mitochondrial intermembrane; that stretch reads DEVMAPAMTI…VDFLAWIDEQ (144 aa). Residues His182, Cys217, Glu219, Cys221, His225, and Met228 each contribute to the Cu cation site. Glu219 lines the Mg(2+) pocket.

Belongs to the cytochrome c oxidase subunit 2 family. Component of the cytochrome c oxidase (complex IV, CIV), a multisubunit enzyme composed of a catalytic core of 3 subunits and several supernumerary subunits. The complex exists as a monomer or a dimer and forms supercomplexes (SCs) in the inner mitochondrial membrane with ubiquinol-cytochrome c oxidoreductase (cytochrome b-c1 complex, complex III, CIII). Cu cation serves as cofactor.

Its subcellular location is the mitochondrion inner membrane. The catalysed reaction is 4 Fe(II)-[cytochrome c] + O2 + 8 H(+)(in) = 4 Fe(III)-[cytochrome c] + 2 H2O + 4 H(+)(out). Component of the cytochrome c oxidase, the last enzyme in the mitochondrial electron transport chain which drives oxidative phosphorylation. The respiratory chain contains 3 multisubunit complexes succinate dehydrogenase (complex II, CII), ubiquinol-cytochrome c oxidoreductase (cytochrome b-c1 complex, complex III, CIII) and cytochrome c oxidase (complex IV, CIV), that cooperate to transfer electrons derived from NADH and succinate to molecular oxygen, creating an electrochemical gradient over the inner membrane that drives transmembrane transport and the ATP synthase. Cytochrome c oxidase is the component of the respiratory chain that catalyzes the reduction of oxygen to water. Electrons originating from reduced cytochrome c in the intermembrane space (IMS) are transferred via the dinuclear copper A center (CU(A)) of subunit 2 and heme A of subunit 1 to the active site in subunit 1, a binuclear center (BNC) formed by heme A3 and copper B (CU(B)). The BNC reduces molecular oxygen to 2 water molecules using 4 electrons from cytochrome c in the IMS and 4 protons from the mitochondrial matrix. The chain is Cytochrome c oxidase subunit 2 (COX2) from Eeniella nana (Yeast).